The sequence spans 182 residues: Ribosome maturation factor RimM (182 aa).

One can recognise a PRC barrel domain in the interval 103–182; sequence EDDYYWKDLM…RVEVDWDPGF (80 aa).

It belongs to the RimM family. In terms of assembly, binds ribosomal protein uS19.

Its subcellular location is the cytoplasm. An accessory protein needed during the final step in the assembly of 30S ribosomal subunit, possibly for assembly of the head region. Essential for efficient processing of 16S rRNA. May be needed both before and after RbfA during the maturation of 16S rRNA. It has affinity for free ribosomal 30S subunits but not for 70S ribosomes. In Yersinia pestis bv. Antiqua (strain Antiqua), this protein is Ribosome maturation factor RimM.